The sequence spans 191 residues: Prostaglandin-H2 D-isomerase (191 aa).

Residues 1–24 (MATPNRPWMGLLLLGVLGVLQTPA) form the signal peptide. N51 is a glycosylation site (N-linked (GlcNAc...) asparagine). The active-site Nucleophile is the C65. N78 carries an N-linked (GlcNAc...) asparagine glycan. C89 and C186 are oxidised to a cystine.

It belongs to the calycin superfamily. Lipocalin family. In terms of assembly, monomer. As to expression, in the male reproductive system, it is expressed in the testis and epididymis, and is secreted into the seminal fluid.

It is found in the rough endoplasmic reticulum. It localises to the nucleus membrane. The protein localises to the golgi apparatus. Its subcellular location is the cytoplasm. The protein resides in the perinuclear region. It is found in the secreted. The catalysed reaction is prostaglandin H2 = prostaglandin D2. In terms of biological role, catalyzes the conversion of PGH2 to PGD2, a prostaglandin involved in smooth muscle contraction/relaxation and a potent inhibitor of platelet aggregation. Involved in a variety of CNS functions, such as sedation, NREM sleep and PGE2-induced allodynia, and may have an anti-apoptotic role in oligodendrocytes. Binds small non-substrate lipophilic molecules, including biliverdin, bilirubin, retinal, retinoic acid and thyroid hormone, and may act as a scavenger for harmful hydrophobic molecules and as a secretory retinoid and thyroid hormone transporter. Possibly involved in development and maintenance of the blood-brain, blood-retina, blood-aqueous humor and blood-testis barrier. It is likely to play important roles in both maturation and maintenance of the central nervous system and male reproductive system. Involved in PLA2G3-dependent maturation of mast cells. PLA2G3 is secreted by immature mast cells and acts on nearby fibroblasts upstream to PTDGS to synthesize PGD2, which in turn promotes mast cell maturation and degranulation via PTGDR. This chain is Prostaglandin-H2 D-isomerase (PTGDS), found in Ovis aries (Sheep).